Here is an 855-residue protein sequence, read N- to C-terminus: DNA mismatch repair protein MutS (855 aa).

616–623 (GPNMGGKS) is an ATP binding site.

This sequence belongs to the DNA mismatch repair MutS family.

In terms of biological role, this protein is involved in the repair of mismatches in DNA. It is possible that it carries out the mismatch recognition step. This protein has a weak ATPase activity. This Salmonella newport (strain SL254) protein is DNA mismatch repair protein MutS.